The following is a 538-amino-acid chain: Cytochrome P450 monooxygenase cfoH (538 aa).

The chain crosses the membrane as a helical span at residues 24-44 (VLTFFAILLVAILLWYMIPYF). Cys471 is a heme binding site.

It belongs to the cytochrome P450 family. Requires heme as cofactor.

It localises to the membrane. It functions in the pathway secondary metabolite biosynthesis; flavonoid biosynthesis. Its function is as follows. Cytochrome P450 monooxygenase; part of the gene cluster that mediates the biosynthesis of chlorflavonin, a fungal flavonoid with acetolactate synthase inhibitory activity. Within the pathway, cfoH is responsible for the hydroxylation of the flavonoid skeleton at position C2'. The pathway begins with the PKS-NRPS hybrid synthetase cfoA that uses benzoic acid or p-hydroxybenzoic acid as a starter unit with four rounds of chain elongation using malonyl-CoA to form the chalcone skeleton. Then, a new type of chalcone isomerase, cfoK, catalyzes the conversion of the chalcone into a flavanone by a histidine-mediated oxa-Michael addition mechanism. The desaturation of flavanone to flavone is catalyzed by a new type of flavone synthase, the flavin mononucleotide (FMN)-dependent oxidoreductase cfoJ. Monooxygenases cfoF, cfoG, and P450 cfoH are responsible for the hydroxylation of the flavonoid skeleton at sites C3, C8, and C2', respectively. Like cfoF, the dehydratase cfoI plays also a role in the hydroxylation of position C3. Methyltransferases cfoB, cfoC, and cfoD then catalyze the methylation of C7-OH, C8-OH, and C3-OH, respectively. Finally, the monooxygenase cfoE is responsible for the chlorination of flavonoid at position C3'. This Aspergillus candidus protein is Cytochrome P450 monooxygenase cfoH.